The chain runs to 586 residues: Phosphomethylpyrimidine synthase (586 aa).

The segment at 1 to 33 is disordered; it reads MKQSVSAEQIELKSSLPGSKKVYVDGPREGMKV. The span at 22–33 shows a compositional bias: basic and acidic residues; the sequence is VYVDGPREGMKV. Residues Asn-193, Met-222, Tyr-251, His-287, 307-309, 348-351, and Glu-387 contribute to the substrate site; these read SRG and DGLR. His-391 is a Zn(2+) binding site. Tyr-414 provides a ligand contact to substrate. Zn(2+) is bound at residue His-455. The [4Fe-4S] cluster site is built by Cys-535, Cys-538, and Cys-543.

This sequence belongs to the ThiC family. [4Fe-4S] cluster serves as cofactor.

It carries out the reaction 5-amino-1-(5-phospho-beta-D-ribosyl)imidazole + S-adenosyl-L-methionine = 4-amino-2-methyl-5-(phosphooxymethyl)pyrimidine + CO + 5'-deoxyadenosine + formate + L-methionine + 3 H(+). It participates in cofactor biosynthesis; thiamine diphosphate biosynthesis. Its function is as follows. Catalyzes the synthesis of the hydroxymethylpyrimidine phosphate (HMP-P) moiety of thiamine from aminoimidazole ribotide (AIR) in a radical S-adenosyl-L-methionine (SAM)-dependent reaction. The polypeptide is Phosphomethylpyrimidine synthase (Bacillus cereus (strain G9842)).